The sequence spans 198 residues: Host transcription reprogramming factor 1 (198 aa).

The signal sequence occupies residues 1 to 19; sequence MQLSNFLSIWALVAMGATA. Disordered regions lie at residues 21 to 59 and 71 to 198; these read PMPSGSAPGNPFADGEAYGARPSQGLTPVPKVHDGSYHS and ERLA…PVQL. A C2H2-type zinc finger spans residues 58 to 81; it reads HSCETCAAPFRTEERLAAHRQADH. Composition is skewed to basic and acidic residues over residues 71-80, 104-128, and 167-177; these read ERLAAHRQAD, TSERERLDRLASRVGEDYVEKRSQE, and KLDKPTRKEQY.

Its subcellular location is the secreted. It localises to the host nucleus. Functionally, secreted effector that translocates into the nuclei of host cells to reprogram the expression of immunity-associated genes by binding to effector binding elements (EBEs) in rice. Binds the 5'-CAATCTTC-3' EBE of promoters from targeted rice genes and probably recruits a yet to be determined host repressor. Causes ambivalent immunity with increased susceptibility to the hemibiotrophic pathogens Magnaporthe oryzae and Xanthomonas oryzae pv. oryzae, but enhances resistance to Cochliobolus miyabeanus, a necrotrophic pathogen. The protein is Host transcription reprogramming factor 1 of Pyricularia oryzae (strain 70-15 / ATCC MYA-4617 / FGSC 8958) (Rice blast fungus).